A 483-amino-acid chain; its full sequence is MRQPPGESDMAVSDALLPSFSTFASGPAGREKTLRPAGAPTNRWREELSHMKRLPPLPGRPYDLAATVATDLESGGAGAACSSNNPALLARRETEEFNDLLDLDFILSNSLTHQESVAATVTTSASASSSSSPASSGPASAPSTCSFSYPIRAGGDPGVAASNTGGGLLYSRESAPPPTAPFNLADINDVSPSGGFVAELLRPELDPVYIPPQQPQPPGGGLMGKFVLKASLTTPGSEYSSPSVISVSKGSPDGSHPVVVAPYSGGPPRMCPKIKQEAVPSCTVSRSLEAHLSAGPQLSNGHRPNTHDFPLGRQLPTRTTPTLSPEELLNSRDCHPGLPLPPGFHPHPGPNYPPFLPDQMQSQVPSLHYQELMPPGSCLPEEPKPKRGRRSWPRKRTATHTCDYAGCGKTYTKSSHLKAHLRTHTGEKPYHCDWDGCGWKFARSDELTRHYRKHTGHRPFQCQKCDRAFSRSDHLALHMKRHF.

Positions 22 to 42 (TFASGPAGREKTLRPAGAPTN) are disordered. Lys32 is covalently cross-linked (Glycyl lysine isopeptide (Lys-Gly) (interchain with G-Cter in ubiquitin)). The short motif at 99–107 (DLLDLDFIL) is the 9aaTAD element. Ser251 carries the phosphoserine modification. The segment at 294 to 395 (AGPQLSNGHR…KRGRRSWPRK (102 aa)) is disordered. Residues 338–356 (LPLPPGFHPHPGPNYPPFL) are compositionally biased toward pro residues. Residue Glu381 is modified to 5-glutamyl polyglutamate. The span at 386–395 (KRGRRSWPRK) shows a compositional bias: basic residues. The tract at residues 386–483 (KRGRRSWPRK…HLALHMKRHF (98 aa)) is interaction with ZNF296. 3 consecutive C2H2-type zinc fingers follow at residues 400–424 (HTCDYAGCGKTYTKSSHLKAHLRTH), 430–454 (YHCDWDGCGWKFARSDELTRHYRKH), and 460–482 (FQCQKCDRAFSRSDHLALHMKRH). The interval 443–474 (RSDELTRHYRKHTGHRPFQCQKCDRAFSRSDH) is interaction with target DNA.

Belongs to the krueppel C2H2-type zinc-finger protein family. In terms of assembly, interacts with MUC1 (via the C-terminal domain). Interacts with POU5F1/OCT4 and SOX2. Interacts with MEIS2 isoform MeisD and PBX1 isoform PBX1a. Interacts with ZNF296. Interacts with GLIS1. Interacts with BTRC; this interaction leads to KLF4 ubiquitination and subsequent degradation. Interacts with IPO7; the interaction facilitates nuclear translocation of KLF4 in dental papilla cells. Ubiquitinated. 'Lys-48'-linked ubiquitinated and targeted for proteasomal degradation by the SCF(BTRC) E3 ubiquitin-protein ligase complex, thereby negatively regulating cell pluripotency maintenance and embryogenesis. Post-translationally, polyglutamylated by TTLL1 and TTLL4 at Glu-381, which inhibits KLF4 binding with E3 ligase component BTRC, thereby impeding ubiquitination. Deglutamylated by CCP1 and CCP6; deglutamylation promotes KLF4 ubiquitination. KLF4 glutamylation state plays a critical role in the regulation of its function in cell reprogramming, pluripotency maintenance and embryogenesis. In terms of tissue distribution, highest expression in the colon. Lower levels in testis, lung and small intestine.

It is found in the nucleus. Its subcellular location is the cytoplasm. Its function is as follows. Transcription factor; can act both as activator and as repressor. Binds the 5'-CACCC-3' core sequence. Binds to the promoter region of its own gene and can activate its own transcription. Regulates the expression of key transcription factors during embryonic development. Plays an important role in maintaining embryonic stem cells, and in preventing their differentiation. Required for establishing the barrier function of the skin and for postnatal maturation and maintenance of the ocular surface. Involved in the differentiation of epithelial cells and may also function in skeletal and kidney development. Contributes to the down-regulation of p53/TP53 transcription. This is Krueppel-like factor 4 (Klf4) from Mus musculus (Mouse).